Here is an 84-residue protein sequence, read N- to C-terminus: Agaphelin (84 aa).

Residues 1-26 (MKMRVHLLAVSVLLVVLALQTTPAEA) form the signal peptide. One can recognise a Kazal-like domain in the interval 29-82 (NSEMATCACQLIYRPVCASNNESYSNECVLKCASETPTGRSIGLHKVKDGNCNG). Cystine bridges form between cysteine 35–cysteine 60, cysteine 37–cysteine 56, and cysteine 45–cysteine 80. Asparagine 49 carries an N-linked (GlcNAc...) asparagine glycan.

As to quaternary structure, interacts with human ELANE.

It localises to the secreted. In terms of biological role, functions as a slow and tight inhibitor of host neutrophil elastase (ELANE). Inhibits host proteinase 3 (PRTN3) and chymotrypsin. Does not inhibit other host proteases involved in coagulation or inflammation, such as cathepsin G (CTSG), trypsin, chymase, matriptase, beta-tryptase, kallikrein, urokinase-type plasminogen activator (PLAU), coagulation factors Xa (F10), XIa (F11), XIIa (F12), plasmin (PLG), thrombin (F2) and tissue-type plasminogen activator (PLAT). Inhibits host neutrophil chemotaxis induced by N-formylmethionine-leucyl-phenylalanine (fMLP) in vitro. Inhibits ELANE-mediated potentiation of platelet aggregation induced by CTSG in the host. Does not affect CTSG- or collagen-induced platelet aggregation. Blocks cleavage of tissue factor pathway inhibitor (TFPI) by ELANE in the host. Inhibits neutrophil-induced coagulation in the host by interfering with neutrophil extracellular traps (NET) formation. Exhibits anti-inflammatory activity. Reduces ischemia-induced activation of MAPK and NF-kappa-B pathways in the host. Decreases CCL2 and IL8 production in IL4- or lipopolysaccharide (LPS)-stimulated host epithelial cells. Reduces caspase-3 (CASP3)-dependent apoptosis in damaged host tissues. The protein is Agaphelin of Anopheles gambiae (African malaria mosquito).